A 519-amino-acid chain; its full sequence is Protein amnionless (519 aa).

The N-terminal stretch at 1–19 (MGAPGRVLLWLQLCALTRA) is a signal peptide. The Extracellular segment spans residues 20–430 (AYKLWVPNTY…NAPGARSDLM (411 aa)). 2 N-linked (GlcNAc...) asparagine glycosylation sites follow: Asn35 and Asn39. 6 disulfides stabilise this stretch: Cys43–Cys152, Cys193–Cys267, Cys259–Cys265, Cys277–Cys303, Cys288–Cys304, and Cys293–Cys307. Residues 67 to 143 (SDMEELQDRK…VLASGAGFSA (77 aa)) are interaction with CUBN. In terms of domain architecture, VWFC spans 256–308 (PEACADPSGCVCGNAEVQPWICAALLQPLGGRCPQAACQDALRPEGQCCDLCG). Residues 431–451 (GGLVAALLLLLLVLLVAALLL) traverse the membrane as a helical segment. Residues 452-519 (RRAGRLRWSR…YGEAEAEAEA (68 aa)) lie on the Cytoplasmic side of the membrane.

As to quaternary structure, interacts (via extracellular region) with CUBN/cubilin, giving rise to a huge complex containing one AMN chain and three CUBN chains. N-glycosylated. Post-translationally, a soluble form arises by proteolytic removal of the membrane anchor. In terms of tissue distribution, detected in kidney cortex (at protein level).

It is found in the apical cell membrane. Its subcellular location is the cell membrane. The protein localises to the endosome membrane. It localises to the membrane. The protein resides in the coated pit. Functionally, membrane-bound component of the endocytic receptor formed by AMN and CUBN. Required for normal CUBN glycosylation and trafficking to the cell surface. The complex formed by AMN and CUBN is required for efficient absorption of vitamin B12. Required for normal CUBN-mediated protein transport in the kidney. The protein is Protein amnionless (AMN) of Sus scrofa (Pig).